We begin with the raw amino-acid sequence, 206 residues long: Pyridoxine/pyridoxamine 5'-phosphate oxidase (206 aa).

FMN is bound by residues 55–60 (RVVLLK), 70–71 (YT), Arg-76, Lys-77, and Gln-99. Substrate is bound at residue Lys-60. Residues Tyr-117, Arg-121, and Ser-125 each contribute to the substrate site. Residues 134–135 (QS) and Trp-179 contribute to the FMN site. Position 185 to 187 (185 to 187 (RLH)) interacts with substrate. Arg-189 lines the FMN pocket.

The protein belongs to the pyridoxamine 5'-phosphate oxidase family. In terms of assembly, homodimer. Requires FMN as cofactor.

It catalyses the reaction pyridoxamine 5'-phosphate + O2 + H2O = pyridoxal 5'-phosphate + H2O2 + NH4(+). The enzyme catalyses pyridoxine 5'-phosphate + O2 = pyridoxal 5'-phosphate + H2O2. Its pathway is cofactor metabolism; pyridoxal 5'-phosphate salvage; pyridoxal 5'-phosphate from pyridoxamine 5'-phosphate: step 1/1. It participates in cofactor metabolism; pyridoxal 5'-phosphate salvage; pyridoxal 5'-phosphate from pyridoxine 5'-phosphate: step 1/1. Its function is as follows. Catalyzes the oxidation of either pyridoxine 5'-phosphate (PNP) or pyridoxamine 5'-phosphate (PMP) into pyridoxal 5'-phosphate (PLP). The polypeptide is Pyridoxine/pyridoxamine 5'-phosphate oxidase (Myxococcus xanthus (strain DK1622)).